The primary structure comprises 1483 residues: Protein ORF C (1483 aa).

Disordered stretches follow at residues 135–268 (LNDR…GRPP), 306–334 (VPYQ…LRPV), 383–506 (RRRA…FKRH), 518–653 (SIDD…DRNR), 680–911 (RQRR…TSVS), 949–976 (SSDD…RGGS), 1013–1061 (ALQQ…TDLI), and 1089–1299 (FSVA…QPSD). The span at 141 to 153 (AAGSAQRGSAGSR) shows a compositional bias: low complexity. A compositionally biased stretch (polar residues) spans 157-170 (DNLTPTAADTTGAQ). Composition is skewed to low complexity over residues 190-206 (ASNV…RRQQ) and 220-251 (ARQQ…TTAT). Residues 252–264 (RQVFEQQGPSTIQ) show a composition bias toward polar residues. Composition is skewed to low complexity over residues 424 to 449 (SGQS…TTGT), 474 to 483 (SNEPSRQSQS), and 529 to 541 (TMTQ…STTR). The segment covering 596–607 (GSVTTTQPSGQL) has biased composition (polar residues). Residues 609–621 (SDDRGRPAPERRQ) are compositionally biased toward basic and acidic residues. A compositionally biased stretch (polar residues) spans 622–640 (QPTSRQTVAQTNIIPNTSG). The span at 680–689 (RQRRETEAEH) shows a compositional bias: basic and acidic residues. Positions 699–710 (TGVTPQRSNNPF) are enriched in polar residues. Positions 740-749 (SLREYRRRDP) are enriched in basic and acidic residues. Low complexity predominate over residues 754 to 774 (GRSYTDGSTTSDGDSSDNSWS). Over residues 841–876 (NLKSPSPRTKLTRSSSLKSPGTTTRDTQQTSHPLTR) the composition is skewed to polar residues. The span at 894 to 909 (DSGGSSDGNTGSSQTS) shows a compositional bias: low complexity. Composition is skewed to polar residues over residues 1096–1109 (GSTS…SSIP) and 1116–1125 (GPSTMTSQSV). Low complexity predominate over residues 1148 to 1158 (SQSQPSSEQPA). Positions 1188-1202 (QPQSTVTNTQTQDVL) are enriched in polar residues. Low complexity-rich tracts occupy residues 1204–1226 (SQGS…KTGS) and 1233–1251 (KSAL…SGKS). The segment covering 1258 to 1276 (AASSTDPTTKPTRKVSINA) has biased composition (polar residues). Residues 1284-1299 (KSSTKQSTKTSTQPSD) show a composition bias toward low complexity. Positions 1408-1438 (AEQIRNLEVDELKILRQQVRERIANERQQQD) form a coiled coil. Residues 1454–1483 (DMLVSEESAAPTPLPMDTGRFTPKSDVDMS) are disordered.

This is Protein ORF C from Elephantid herpesvirus 1 (isolate Asian elephant/Berlin/Kiba/1998) (EIHV-1).